A 1296-amino-acid polypeptide reads, in one-letter code: Phosphoribosylformylglycinamidine synthase (1296 aa).

Residues 304-323 (WPGAATGSGGEIRDEGATGR) form a disordered region. ATP is bound by residues 306–317 (GAATGSGGEIRD) and Ala-677. Residues Asp-678, Glu-717, Asn-721, and Asp-885 each coordinate Mg(2+). Residue Ser-887 coordinates ATP. The span at 1000 to 1013 (PDCADQEHQAKQDE) shows a compositional bias: basic and acidic residues. The disordered stretch occupies residues 1000–1019 (PDCADQEHQAKQDESDPGLN). Positions 1043 to 1296 (VAVLREQGVN…MFRNARKQLG (254 aa)) constitute a Glutamine amidotransferase type-1 domain. The active-site Nucleophile is Cys-1136. Residues His-1261 and Glu-1263 contribute to the active site.

The protein in the N-terminal section; belongs to the FGAMS family. As to quaternary structure, monomer.

The protein resides in the cytoplasm. It catalyses the reaction N(2)-formyl-N(1)-(5-phospho-beta-D-ribosyl)glycinamide + L-glutamine + ATP + H2O = 2-formamido-N(1)-(5-O-phospho-beta-D-ribosyl)acetamidine + L-glutamate + ADP + phosphate + H(+). Its pathway is purine metabolism; IMP biosynthesis via de novo pathway; 5-amino-1-(5-phospho-D-ribosyl)imidazole from N(2)-formyl-N(1)-(5-phospho-D-ribosyl)glycinamide: step 1/2. In terms of biological role, phosphoribosylformylglycinamidine synthase involved in the purines biosynthetic pathway. Catalyzes the ATP-dependent conversion of formylglycinamide ribonucleotide (FGAR) and glutamine to yield formylglycinamidine ribonucleotide (FGAM) and glutamate. This chain is Phosphoribosylformylglycinamidine synthase, found in Yersinia pestis bv. Antiqua (strain Nepal516).